Reading from the N-terminus, the 573-residue chain is Phosphoenolpyruvate-protein phosphotransferase (573 aa).

The active-site Tele-phosphohistidine intermediate is the histidine 190. Residues arginine 297 and arginine 332 each contribute to the phosphoenolpyruvate site. The Mg(2+) site is built by glutamate 431 and aspartate 455. Phosphoenolpyruvate-binding positions include 454 to 455 (ND) and arginine 465. Cysteine 502 functions as the Proton donor in the catalytic mechanism.

Belongs to the PEP-utilizing enzyme family. In terms of assembly, homodimer. Requires Mg(2+) as cofactor.

It is found in the cytoplasm. The enzyme catalyses L-histidyl-[protein] + phosphoenolpyruvate = N(pros)-phospho-L-histidyl-[protein] + pyruvate. Its activity is regulated as follows. Irreversibly inhibited the sulfhydryl reagent N-ethylmaleimide (NEM). Its function is as follows. General (non sugar-specific) component of the phosphoenolpyruvate-dependent sugar phosphotransferase system (sugar PTS). This major carbohydrate active-transport system catalyzes the phosphorylation of incoming sugar substrates concomitantly with their translocation across the cell membrane. Enzyme I transfers the phosphoryl group from phosphoenolpyruvate (PEP) to the phosphoryl carrier protein (HPr). This chain is Phosphoenolpyruvate-protein phosphotransferase (ptsI), found in Mycoplasma capricolum subsp. capricolum (strain California kid / ATCC 27343 / NCTC 10154).